A 58-amino-acid chain; its full sequence is Putative calcium channel toxin 196 (58 aa).

The N-terminal stretch at 1 to 16 (GSLLLVLFLLSVICYA) is a signal peptide. The propeptide occupies 17–26 (EIAAGPTKCQ). Disulfide bonds link C25–C38, C31–C43, and C37–C52.

It belongs to the scorpion calcin-like family. KTX subfamily. As to expression, expressed by the venom gland.

The protein resides in the secreted. Its function is as follows. May inhibit voltage-gated potassium channels Kv1.1/KCNA1, hKv1.2/KCNA2, and Kv1.3/KCNA3. May also increase intracellular calcium release through the activation of nuclear inositol 1,4,5-trisphosphate receptors (ITPR) of cardiomyocytes, thereby causing an increase in the contraction frequency of these cells. The sequence is that of Putative calcium channel toxin 196 from Lychas mucronatus (Chinese swimming scorpion).